A 279-amino-acid chain; its full sequence is Putative ABC transporter ATP-binding protein CA_C1368 (279 aa).

One can recognise an ABC transporter domain in the interval 4 to 239 (ISINNVDYIY…KKVLRNINLR (236 aa)). 37–44 (GPNGAGKS) is an ATP binding site.

It belongs to the ABC transporter superfamily.

It localises to the cell membrane. In terms of biological role, probably part of an ABC transporter complex. Responsible for energy coupling to the transport system. The chain is Putative ABC transporter ATP-binding protein CA_C1368 from Clostridium acetobutylicum (strain ATCC 824 / DSM 792 / JCM 1419 / IAM 19013 / LMG 5710 / NBRC 13948 / NRRL B-527 / VKM B-1787 / 2291 / W).